The sequence spans 623 residues: NADPH-dependent diflavin oxidoreductase 1 (623 aa).

The 146-residue stretch at 8–153 (LLVLYASQTG…TLDPWMLSLW (146 aa)) folds into the Flavodoxin-like domain. FMN-binding positions include 14 to 19 (SQTGNA), 62 to 65 (STTG), and Asp135. The region spanning 221-467 (KPDCFLKMTR…SLPAPSQSLP (247 aa)) is the FAD-binding FR-type domain. FAD is bound by residues Arg369, 399 to 402 (RAFS), and 433 to 436 (GLCS). NADP(+) contacts are provided by residues Thr475, 541 to 542 (SR), 547 to 551 (KVYVQ), and Asp583. Position 622 (Trp622) interacts with FAD.

It belongs to the NADPH-dependent diflavin oxidoreductase NDOR1 family. In the N-terminal section; belongs to the flavodoxin family. The protein in the C-terminal section; belongs to the flavoprotein pyridine nucleotide cytochrome reductase family. As to quaternary structure, interacts with At5g18400. The cofactor is FAD. FMN is required as a cofactor. Widely expressed.

The protein localises to the cytoplasm. The protein resides in the nucleus. The enzyme catalyses 2 oxidized [2Fe-2S]-[protein] + NADPH = 2 reduced [2Fe-2S]-[protein] + NADP(+) + H(+). Its function is as follows. NADPH-dependent reductase which is a central component of the cytosolic iron-sulfur (Fe-S) protein assembly (CIA) machinery. Transfers electrons from NADPH via its FAD and FMN prosthetic groups to the [2Fe-2S] cluster of the anamorsin/DRE2 homolog, another key component of the CIA machinery. In turn, this reduced cluster provides electrons for assembly of cytosolic iron-sulfur cluster proteins. Catalyzes the NADP-dependent reduction of cytochrome c, but not cytochrome P450 in vitro. Required for embryo development. The sequence is that of NADPH-dependent diflavin oxidoreductase 1 (ATR3) from Arabidopsis thaliana (Mouse-ear cress).